A 357-amino-acid chain; its full sequence is Phospho-N-acetylmuramoyl-pentapeptide-transferase (357 aa).

10 helical membrane passes run 4–24 (QILF…PLLI), 52–72 (TMGG…SKVI), 77–97 (PTFS…VGFL), 115–135 (AKMA…LQFA), 153–173 (FGWT…ILAM), 186–206 (LATG…VWQF), 228–248 (PLDL…FLWW), 255–275 (IFMG…LAIC), 280–300 (LLVA…VIQV), and 334–354 (FWII…AGWA).

The protein belongs to the glycosyltransferase 4 family. MraY subfamily. The cofactor is Mg(2+).

Its subcellular location is the cell membrane. The catalysed reaction is UDP-N-acetyl-alpha-D-muramoyl-L-alanyl-gamma-D-glutamyl-meso-2,6-diaminopimeloyl-D-alanyl-D-alanine + di-trans,octa-cis-undecaprenyl phosphate = di-trans,octa-cis-undecaprenyl diphospho-N-acetyl-alpha-D-muramoyl-L-alanyl-D-glutamyl-meso-2,6-diaminopimeloyl-D-alanyl-D-alanine + UMP. The protein operates within cell wall biogenesis; peptidoglycan biosynthesis. Catalyzes the initial step of the lipid cycle reactions in the biosynthesis of the cell wall peptidoglycan: transfers peptidoglycan precursor phospho-MurNAc-pentapeptide from UDP-MurNAc-pentapeptide onto the lipid carrier undecaprenyl phosphate, yielding undecaprenyl-pyrophosphoryl-MurNAc-pentapeptide, known as lipid I. This is Phospho-N-acetylmuramoyl-pentapeptide-transferase from Streptomyces avermitilis (strain ATCC 31267 / DSM 46492 / JCM 5070 / NBRC 14893 / NCIMB 12804 / NRRL 8165 / MA-4680).